The following is a 71-amino-acid chain: Small ribosomal subunit protein bS21 (71 aa).

Belongs to the bacterial ribosomal protein bS21 family.

This is Small ribosomal subunit protein bS21 from Photobacterium profundum (strain SS9).